The chain runs to 463 residues: Proton-coupled folate transporter (463 aa).

At 1–27 the chain is on the cytoplasmic side; the sequence is MVSPDDSPEIRDRPRPRRCLLPASVTV. Residues 28–46 traverse the membrane as a helical segment; sequence EPVIFLSMFALALQGPLAT. The Extracellular portion of the chain corresponds to 47–86; that stretch reads QYLWDRLSADIGFNGTRTVGCAMNGSKSAGPEQQEVETLT. N-linked (GlcNAc...) asparagine glycans are attached at residues N60 and N70. Cysteines 67 and 302 form a disulfide. The chain crosses the membrane as a helical span at residues 87–112; that stretch reads AHWSLYINLGGFLVGLFSVMLLGPWS. At 113–116 the chain is on the cytoplasmic side; it reads DKVG. The helical transmembrane segment at 117-139 threads the bilayer; that stretch reads RRPVLMLPCIGLALQAAVYLLVM. Residues 140-144 are Extracellular-facing; the sequence is YQELH. A helical transmembrane segment spans residues 145 to 158; it reads VGYFLIGRFISGIS. At 159–181 the chain is on the cytoplasmic side; the sequence is GDFNMILAGCFAYIADVSDRQSR. H(+) contacts are provided by D160 and E189. Residues 182–207 form a helical membrane-spanning segment; it reads TFRVAVLEACLGIAGMVASIIGGHWR. Over 208–212 the chain is Extracellular; that stretch reads KAQGY. A helical transmembrane segment spans residues 213–231; that stretch reads INPFWLVFAVNLFTALYVY. The Cytoplasmic segment spans residues 232-270; it reads FCVEESVKDKKPARLFTHRHYQSFFRLFTVQGENNRRRK. A helical transmembrane segment spans residues 271 to 293; that stretch reads LFLYSLALLVVVTVHMGAKNLFV. A H(+)-binding site is contributed by H285. Residues 294–306 are Extracellular-facing; the sequence is LYELSYPLCWDSD. A helical membrane pass occupies residues 307–329; the sequence is LIGYGSAAEHLTYLSSLAGLRLF. The Cytoplasmic segment spans residues 330–335; that stretch reads QLCLAD. Residues 336–355 form a helical membrane-spanning segment; sequence SWVAEMGFISNISGLVVISL. Over 356–359 the chain is Extracellular; the sequence is ASTT. The chain crosses the membrane as a helical span at residues 360-380; the sequence is PIMFTGYGLRFFAMATTPVIR. Residues 381 to 392 lie on the Cytoplasmic side of the membrane; sequence SKLSKMVEEGEQ. The helical transmembrane segment at 393–418 threads the bilayer; sequence GALFSSVACVEGLSFLLATGLFNSLY. At 419-426 the chain is on the extracellular side; the sequence is PATLHFMK. Residues 427 to 445 traverse the membrane as a helical segment; that stretch reads GFPFLLGALLLLIPAGIIG. Residues 446–463 lie on the Cytoplasmic side of the membrane; sequence LIEVCEQKPMYSQFSEIS.

It belongs to the major facilitator superfamily. SLC46A family. As to quaternary structure, monomer.

It localises to the cell membrane. It is found in the apical cell membrane. The protein resides in the basolateral cell membrane. Its subcellular location is the endosome membrane. The protein localises to the cytoplasm. The enzyme catalyses folate(in) + H(+)(in) = folate(out) + H(+)(out). The catalysed reaction is (6S)-5-methyl-5,6,7,8-tetrahydrofolate(in) + H(+)(in) = (6S)-5-methyl-5,6,7,8-tetrahydrofolate(out) + H(+)(out). It catalyses the reaction methotrexate(in) + H(+)(in) = methotrexate(out) + H(+)(out). It carries out the reaction pemetrexed(in) + H(+)(in) = pemetrexed(out) + H(+)(out). In terms of biological role, proton-coupled folate symporter that mediates folate absorption using an H(+) gradient as a driving force. Involved in the intestinal absorption of folates at the brush-border membrane of the proximal jejunum, and the transport from blood to cerebrospinal fluid across the choroid plexus. Functions at acidic pH via alternate outward- and inward-open conformation states. Protonation of residues in the outward open state primes the protein for transport. Binding of folate promotes breaking of salt bridge network and subsequent closure of the extracellular gate, leading to the inward-open state and release of protons and folate. Also able to transport antifolate drugs, such as methotrexate and pemetrexed. Also acts as a lower-affinity, pH-independent heme carrier protein and constitutes the main importer of heme in the intestine. Imports heme in the retina and retinal pigment epithelium, in neurons of the hippocampus, in hepatocytes and in the renal epithelial cells. This Xenopus laevis (African clawed frog) protein is Proton-coupled folate transporter.